A 527-amino-acid chain; its full sequence is Nucleus accumbens-associated protein 1 (527 aa).

The BTB domain maps to 30–94 (CDVSVVVKGH…CYTGRLSMNV (65 aa)). The tract at residues 131 to 153 (QGLHAEEAPSSEPQSPVAQTSGW) is disordered. A compositionally biased stretch (polar residues) spans 141–152 (SEPQSPVAQTSG). Residue K167 forms a Glycyl lysine isopeptide (Lys-Gly) (interchain with G-Cter in SUMO1); alternate linkage. K167 is covalently cross-linked (Glycyl lysine isopeptide (Lys-Gly) (interchain with G-Cter in SUMO2); alternate). K183 participates in a covalent cross-link: Glycyl lysine isopeptide (Lys-Gly) (interchain with G-Cter in SUMO2). S188 carries the phosphoserine modification. The tract at residues 210–292 (DLAANRPHQP…DEEEDGGEEG (83 aa)) is disordered. Positions 225–251 (APVVAAAQPAVAAGAGQPAGGVAAAGG) are enriched in low complexity. Residues 255-277 (GPSTSERTSPGTSSAYTSDSPGS) show a composition bias toward polar residues. S259 is subject to Phosphoserine; by PKC. Residues 281–292 (EEDEEEDGGEEG) show a composition bias toward acidic residues. Glycyl lysine isopeptide (Lys-Gly) (interchain with G-Cter in SUMO2) cross-links involve residues K318, K452, K480, K483, and K498. The BEN domain maps to 374–471 (GTNVYITRAQ…DMCTNARRVV (98 aa)).

Homooligomer; mediated by the BTB domain. Interacts with HDAC3 and HDAC4. Interacts (via BTB domain) with CUL3, PSMD7 and RCOR1. Overexpressed in several types of carcinomas including ovarian serous carcinomas. Expression levels positively correlate with tumor recurrence in ovarian serous carcinomas, and intense immunoreactivity in primary ovarian tumors predicts early recurrence. Up-regulated in ovarian carcinomas after chemotherapy, suggesting a role in development of chemotherapy resistance in ovarian cancer.

It is found in the nucleus. The protein localises to the cytoplasm. Its function is as follows. Functions as a transcriptional repressor. Seems to function as a transcriptional corepressor in neuronal cells through recruitment of HDAC3 and HDAC4. Contributes to tumor progression, and tumor cell proliferation and survival. This may be mediated at least in part through repressing transcriptional activity of GADD45GIP1. Required for recruiting the proteasome from the nucleus to the cytoplasm and dendritic spines. In Homo sapiens (Human), this protein is Nucleus accumbens-associated protein 1 (NACC1).